A 262-amino-acid polypeptide reads, in one-letter code: Tropinone reductase homolog At2g29290 (262 aa).

Residue 13–37 coordinates NADP(+); that stretch reads LVTGGTKGIGEAVVEELSILGARVH. Residue S146 coordinates substrate. Y159 acts as the Proton acceptor in catalysis.

Belongs to the short-chain dehydrogenases/reductases (SDR) family. SDR65C subfamily.

The sequence is that of Tropinone reductase homolog At2g29290 from Arabidopsis thaliana (Mouse-ear cress).